The sequence spans 310 residues: Porphobilinogen deaminase (310 aa).

Cys241 carries the S-(dipyrrolylmethanemethyl)cysteine modification.

This sequence belongs to the HMBS family. Monomer. Dipyrromethane serves as cofactor.

The enzyme catalyses 4 porphobilinogen + H2O = hydroxymethylbilane + 4 NH4(+). It participates in porphyrin-containing compound metabolism; protoporphyrin-IX biosynthesis; coproporphyrinogen-III from 5-aminolevulinate: step 2/4. Tetrapolymerization of the monopyrrole PBG into the hydroxymethylbilane pre-uroporphyrinogen in several discrete steps. The chain is Porphobilinogen deaminase from Lysinibacillus sphaericus (strain C3-41).